A 429-amino-acid chain; its full sequence is UDP-N-acetylglucosamine 1-carboxyvinyltransferase (429 aa).

22 to 23 (KN) is a binding site for phosphoenolpyruvate. Arg93 contacts UDP-N-acetyl-alpha-D-glucosamine. The Proton donor role is filled by Cys117. Cys117 is modified (2-(S-cysteinyl)pyruvic acid O-phosphothioketal). Residues 122–126 (RPVDL), Asp307, and Val329 contribute to the UDP-N-acetyl-alpha-D-glucosamine site.

The protein belongs to the EPSP synthase family. MurA subfamily.

It localises to the cytoplasm. It catalyses the reaction phosphoenolpyruvate + UDP-N-acetyl-alpha-D-glucosamine = UDP-N-acetyl-3-O-(1-carboxyvinyl)-alpha-D-glucosamine + phosphate. It functions in the pathway cell wall biogenesis; peptidoglycan biosynthesis. Functionally, cell wall formation. Adds enolpyruvyl to UDP-N-acetylglucosamine. This is UDP-N-acetylglucosamine 1-carboxyvinyltransferase from Chloroherpeton thalassium (strain ATCC 35110 / GB-78).